A 123-amino-acid polypeptide reads, in one-letter code: Small ribosomal subunit protein bS16 (123 aa).

A disordered region spans residues 87–123 (AKNNPIKAKPGKRAQERAAEKAQKAADAAAAAADAAE). Residues 99 to 110 (RAQERAAEKAQK) are compositionally biased toward basic and acidic residues. Low complexity predominate over residues 111–123 (AADAAAAAADAAE).

It belongs to the bacterial ribosomal protein bS16 family.

The sequence is that of Small ribosomal subunit protein bS16 from Rhizobium etli (strain CIAT 652).